Reading from the N-terminus, the 195-residue chain is Cysteine/O-acetylserine efflux protein (195 aa).

Topologically, residues 1–9 are periplasmic; the sequence is MTPMLLSAF. Residues 10–32 form a helical membrane-spanning segment; it reads WTYTLITALTPGPNNILALSAAT. Residues 33–46 lie on the Cytoplasmic side of the membrane; sequence AHGFRQSIRVLAGM. The chain crosses the membrane as a helical span at residues 47 to 67; sequence SLGFLVVMLLCAGIAFSLAVI. Topologically, residues 68–69 are periplasmic; sequence DP. The chain crosses the membrane as a helical span at residues 70-90; that stretch reads AIIHLLSWVGAAYILWLAWKI. At 91-104 the chain is on the cytoplasmic side; the sequence is ATSPAADEKVRPKP. The helical transmembrane segment at 105 to 125 threads the bilayer; it reads VGFWVSFGLQFVNVKIILYGI. Residues 126–141 lie on the Periplasmic side of the membrane; it reads TALSTFVLPQTQALNW. Residues 142 to 162 traverse the membrane as a helical segment; sequence VIGVSILLALIGTFGNVCWAL. At 163–176 the chain is on the cytoplasmic side; sequence AGHLFQRAFRHYGR. The helical transmembrane segment at 177-194 threads the bilayer; it reads QLNIILALLLVYCAVRIF. A topological domain (periplasmic) is located at residue tyrosine 195.

The protein belongs to the Rht family.

It is found in the cell inner membrane. It carries out the reaction O-acetyl-L-serine(in) = O-acetyl-L-serine(out). The catalysed reaction is L-cysteine(in) = L-cysteine(out). Its function is as follows. Exporter of O-acetylserine (OAS) and cysteine. This chain is Cysteine/O-acetylserine efflux protein (eamB), found in Salmonella paratyphi A (strain ATCC 9150 / SARB42).